A 192-amino-acid chain; its full sequence is Pyridoxal 5'-phosphate synthase subunit PdxT (192 aa).

53-55 (GES) is an L-glutamine binding site. Cys85 (nucleophile) is an active-site residue. Residues Arg112 and 140 to 141 (IR) contribute to the L-glutamine site. Catalysis depends on charge relay system residues His176 and Glu178.

This sequence belongs to the glutaminase PdxT/SNO family. As to quaternary structure, in the presence of PdxS, forms a dodecamer of heterodimers. Only shows activity in the heterodimer.

It catalyses the reaction aldehydo-D-ribose 5-phosphate + D-glyceraldehyde 3-phosphate + L-glutamine = pyridoxal 5'-phosphate + L-glutamate + phosphate + 3 H2O + H(+). The catalysed reaction is L-glutamine + H2O = L-glutamate + NH4(+). It functions in the pathway cofactor biosynthesis; pyridoxal 5'-phosphate biosynthesis. In terms of biological role, catalyzes the hydrolysis of glutamine to glutamate and ammonia as part of the biosynthesis of pyridoxal 5'-phosphate. The resulting ammonia molecule is channeled to the active site of PdxS. This chain is Pyridoxal 5'-phosphate synthase subunit PdxT, found in Natronomonas pharaonis (strain ATCC 35678 / DSM 2160 / CIP 103997 / JCM 8858 / NBRC 14720 / NCIMB 2260 / Gabara) (Halobacterium pharaonis).